A 271-amino-acid polypeptide reads, in one-letter code: Aquaporin-2 (271 aa).

Residues 1-11 are Cytoplasmic-facing; the sequence is MWELRSIAFSR. Residues 12–32 traverse the membrane as a helical segment; that stretch reads AVLAEFLATLLFVFFGLGSAL. Residues 33-40 lie on the Extracellular side of the membrane; sequence NWPQALPS. A helical membrane pass occupies residues 41–59; the sequence is VLQIAMAFGLAIGTLVQAL. At 60 to 64 the chain is on the cytoplasmic side; that stretch reads GHVSG. Residues 65–74 constitute an intramembrane region (discontinuously helical); sequence AHINPAVTVA. Residues 68 to 70 carry the NPA 1 motif; the sequence is NPA. Residues 75-85 lie on the Cytoplasmic side of the membrane; the sequence is CLVGCHVSFLR. The helical transmembrane segment at 86–107 threads the bilayer; sequence AVFYVAAQLLGAVAGAALLHEI. At 108–127 the chain is on the extracellular side; sequence TPPAIRGDLAVNALNNNSTA. An N-linked (GlcNAc...) asparagine glycan is attached at Asn-123. A helical transmembrane segment spans residues 128-148; the sequence is GQAVTVELFLTLQLVLCIFAS. At 149–156 the chain is on the cytoplasmic side; it reads TDERRGDN. The helical transmembrane segment at 157–176 threads the bilayer; it reads VGTPALSIGFSVALGHLLGI. Topologically, residues 177 to 180 are extracellular; the sequence is HYTG. The segment at residues 181–193 is an intramembrane region (discontinuously helical); it reads CSMNPARSLAPAI. An NPA 2 motif is present at residues 184-186; sequence NPA. Residues 194-201 lie on the Extracellular side of the membrane; that stretch reads VTGKFDDH. Residues 202–222 traverse the membrane as a helical segment; the sequence is WVFWIGPLVGAIVASLLYNYV. At 223 to 271 the chain is on the cytoplasmic side; that stretch reads LFPPAKSLSERLAVLKGLEPDTDWEEREVRRRQSVELHSPQSLPRGSKA. A disordered region spans residues 251 to 271; the sequence is VRRRQSVELHSPQSLPRGSKA. Ser-256 bears the Phosphoserine mark. A compositionally biased stretch (polar residues) spans 261–271; that stretch reads SPQSLPRGSKA.

Belongs to the MIP/aquaporin (TC 1.A.8) family. As to quaternary structure, homotetramer. In terms of processing, ser-256 phosphorylation is necessary and sufficient for expression at the apical membrane. Endocytosis is not phosphorylation-dependent. N-glycosylated.

The protein localises to the apical cell membrane. The protein resides in the basolateral cell membrane. It is found in the cell membrane. Its subcellular location is the cytoplasmic vesicle membrane. It localises to the golgi apparatus. The protein localises to the trans-Golgi network membrane. The catalysed reaction is H2O(in) = H2O(out). It carries out the reaction glycerol(in) = glycerol(out). Functionally, forms a water-specific channel that provides the plasma membranes of renal collecting duct with high permeability to water, thereby permitting water to move in the direction of an osmotic gradient. Could also be permeable to glycerol. This chain is Aquaporin-2, found in Bos taurus (Bovine).